Here is a 303-residue protein sequence, read N- to C-terminus: Ribonuclease HIII (303 aa).

Residues Trp89–Leu303 enclose the RNase H type-2 domain. A divalent metal cation contacts are provided by Asp95, Glu96, and Asp199.

The protein belongs to the RNase HII family. RnhC subfamily. It depends on Mn(2+) as a cofactor. The cofactor is Mg(2+).

Its subcellular location is the cytoplasm. It carries out the reaction Endonucleolytic cleavage to 5'-phosphomonoester.. Endonuclease that specifically degrades the RNA of RNA-DNA hybrids. The protein is Ribonuclease HIII of Leuconostoc mesenteroides subsp. mesenteroides (strain ATCC 8293 / DSM 20343 / BCRC 11652 / CCM 1803 / JCM 6124 / NCDO 523 / NBRC 100496 / NCIMB 8023 / NCTC 12954 / NRRL B-1118 / 37Y).